Reading from the N-terminus, the 479-residue chain is Ribulose bisphosphate carboxylase large chain (479 aa).

Residues 1-2 constitute a propeptide that is removed on maturation; it reads MS. Positions 123 and 173 each coordinate substrate. The Proton acceptor role is filled by Lys-175. Lys-177 contributes to the substrate binding site. 3 residues coordinate Mg(2+): Lys-201, Asp-203, and Glu-204. Lys-201 is modified (N6-carboxylysine). Ser-208 carries the phosphoserine modification. Residue His-294 is the Proton acceptor of the active site. Substrate contacts are provided by Arg-295 and His-327. Thr-330 is subject to Phosphothreonine. Ser-379 is a binding site for substrate.

This sequence belongs to the RuBisCO large chain family. Type I subfamily. In terms of assembly, heterohexadecamer of 8 large chains and 8 small chains; disulfide-linked. The disulfide link is formed within the large subunit homodimers. Requires Mg(2+) as cofactor. The disulfide bond which can form in the large chain dimeric partners within the hexadecamer appears to be associated with oxidative stress and protein turnover.

Its subcellular location is the plastid. It is found in the chloroplast. It catalyses the reaction 2 (2R)-3-phosphoglycerate + 2 H(+) = D-ribulose 1,5-bisphosphate + CO2 + H2O. It carries out the reaction D-ribulose 1,5-bisphosphate + O2 = 2-phosphoglycolate + (2R)-3-phosphoglycerate + 2 H(+). RuBisCO catalyzes two reactions: the carboxylation of D-ribulose 1,5-bisphosphate, the primary event in carbon dioxide fixation, as well as the oxidative fragmentation of the pentose substrate in the photorespiration process. Both reactions occur simultaneously and in competition at the same active site. This chain is Ribulose bisphosphate carboxylase large chain, found in Crucihimalaya wallichii (Rock-cress).